The following is an 880-amino-acid chain: Potassium transport protein 2 (880 aa).

A glycan (N-linked (GlcNAc...) asparagine) is linked at Asn-9. The next 2 helical transmembrane spans lie at 28–48 (FVQD…LYGS) and 84–104 (TILL…LTLF). Residues 157-182 (MHRPVAPETKAEEAEHQENEKHHRHH) form a disordered region. Positions 165-177 (TKAEEAEHQENEK) are enriched in basic and acidic residues. Asn-239, Asn-283, Asn-293, Asn-294, Asn-321, Asn-443, and Asn-460 each carry an N-linked (GlcNAc...) asparagine glycan. Positions 289–315 (HHLDNNSSISSHNPSLETANDGNQETV) are enriched in polar residues. A disordered region spans residues 289-344 (HHLDNNSSISSHNPSLETANDGNQETVSSSNSNYSTTRVDNDPHVASYSPQNSNFD). The segment covering 316 to 325 (SSSNSNYSTT) has biased composition (low complexity). Helical transmembrane passes span 494–514 (ILVV…LIFI), 571–591 (LIFL…WIMI), 625–645 (WVLF…FMVL), 684–704 (IAPA…YPIA), 756–776 (QLSH…IVEG), and 787–807 (FTLF…GLSL). A disordered region spans residues 857 to 880 (REEEDYMRRHGKKNTNRADPVPSS).

This sequence belongs to the TrkH potassium transport family.

The protein resides in the cell membrane. Its function is as follows. Together with TRK1, defines the major, high-affinity potassium influx transport system. Involved in maintenance of the proper sodium/potassium ratio in the cell and in regulating the plasma membrane potential. This Schizosaccharomyces pombe (strain 972 / ATCC 24843) (Fission yeast) protein is Potassium transport protein 2 (trk2).